The primary structure comprises 379 residues: Chaperone protein DnaJ (379 aa).

A J domain is found at 5–70 (DYYEVLGVEK…QKRAAYDQYG (66 aa)). The CR-type zinc finger occupies 133-211 (GKSVEIRVPT…CHGQGRVEKT (79 aa)). Zn(2+) contacts are provided by Cys146, Cys149, Cys163, Cys166, Cys185, Cys188, Cys199, and Cys202. CXXCXGXG motif repeat units follow at residues 146 to 153 (CDTCDGSG), 163 to 170 (CTTCHGQG), 185 to 192 (CPTCGGKG), and 199 to 206 (CDVCHGQG).

Belongs to the DnaJ family. As to quaternary structure, homodimer. Requires Zn(2+) as cofactor.

It localises to the cytoplasm. Participates actively in the response to hyperosmotic and heat shock by preventing the aggregation of stress-denatured proteins and by disaggregating proteins, also in an autonomous, DnaK-independent fashion. Unfolded proteins bind initially to DnaJ; upon interaction with the DnaJ-bound protein, DnaK hydrolyzes its bound ATP, resulting in the formation of a stable complex. GrpE releases ADP from DnaK; ATP binding to DnaK triggers the release of the substrate protein, thus completing the reaction cycle. Several rounds of ATP-dependent interactions between DnaJ, DnaK and GrpE are required for fully efficient folding. Also involved, together with DnaK and GrpE, in the DNA replication of plasmids through activation of initiation proteins. This Pseudoalteromonas atlantica (strain T6c / ATCC BAA-1087) protein is Chaperone protein DnaJ.